A 792-amino-acid polypeptide reads, in one-letter code: Probable exo-1,4-beta-xylosidase xlnD (792 aa).

Positions 1–20 (MSVAKSIAAVLVALLPGALA) are cleaved as a signal peptide. N-linked (GlcNAc...) asparagine glycans are attached at residues N23, N87, N118, N142, and N246. D310 is a catalytic residue. N326, N385, N404, N440, N477, N518, N679, and N701 each carry an N-linked (GlcNAc...) asparagine glycan.

The protein belongs to the glycosyl hydrolase 3 family.

Its subcellular location is the secreted. It carries out the reaction Hydrolysis of (1-&gt;4)-beta-D-xylans, to remove successive D-xylose residues from the non-reducing termini.. It participates in glycan degradation; xylan degradation. Xylan 1,4-beta-xylosidase involved in the hydrolysis of xylan, a major structural heterogeneous polysaccharide found in plant biomass representing the second most abundant polysaccharide in the biosphere, after cellulose. The chain is Probable exo-1,4-beta-xylosidase xlnD (xlnD) from Aspergillus fumigatus (strain CBS 144.89 / FGSC A1163 / CEA10) (Neosartorya fumigata).